We begin with the raw amino-acid sequence, 137 residues long: Nucleoside diphosphate kinase (137 aa).

ATP is bound by residues Lys-9, Phe-57, Arg-85, Thr-91, Arg-102, and Asn-112. Residue His-115 is the Pros-phosphohistidine intermediate of the active site.

Belongs to the NDK family. Homotetramer. Mg(2+) is required as a cofactor.

It localises to the cytoplasm. The catalysed reaction is a 2'-deoxyribonucleoside 5'-diphosphate + ATP = a 2'-deoxyribonucleoside 5'-triphosphate + ADP. It carries out the reaction a ribonucleoside 5'-diphosphate + ATP = a ribonucleoside 5'-triphosphate + ADP. Major role in the synthesis of nucleoside triphosphates other than ATP. The ATP gamma phosphate is transferred to the NDP beta phosphate via a ping-pong mechanism, using a phosphorylated active-site intermediate. The chain is Nucleoside diphosphate kinase from Wolinella succinogenes (strain ATCC 29543 / DSM 1740 / CCUG 13145 / JCM 31913 / LMG 7466 / NCTC 11488 / FDC 602W) (Vibrio succinogenes).